The sequence spans 500 residues: Glycerol kinase (500 aa).

T11 serves as a coordination point for ADP. ATP is bound by residues T11, T12, and S13. Sn-glycerol 3-phosphate is bound at residue T11. R15 lines the ADP pocket. R81, E82, Y133, and D242 together coordinate sn-glycerol 3-phosphate. Glycerol-binding residues include R81, E82, Y133, D242, and Q243. ADP-binding residues include T264 and G307. Residues T264, G307, Q311, and G411 each coordinate ATP. G411 is a binding site for ADP.

The protein belongs to the FGGY kinase family.

The catalysed reaction is glycerol + ATP = sn-glycerol 3-phosphate + ADP + H(+). It participates in polyol metabolism; glycerol degradation via glycerol kinase pathway; sn-glycerol 3-phosphate from glycerol: step 1/1. Its activity is regulated as follows. Inhibited by fructose 1,6-bisphosphate (FBP). Key enzyme in the regulation of glycerol uptake and metabolism. Catalyzes the phosphorylation of glycerol to yield sn-glycerol 3-phosphate. The sequence is that of Glycerol kinase from Rhodopseudomonas palustris (strain BisA53).